Consider the following 482-residue polypeptide: Cytochrome P450 monooxygenase pynD (482 aa).

The first 22 residues, 1–22 (MWRIPVIVALVAGLLYWVRKQG), serve as a signal peptide directing secretion. N401 is a glycosylation site (N-linked (GlcNAc...) asparagine). C417 contacts heme.

Belongs to the cytochrome P450 family. Heme is required as a cofactor.

Its pathway is secondary metabolite biosynthesis. Its function is as follows. Cytochrome P450 monooxygenase; part of the gene cluster that mediates the biosynthesis of pyranonigrins, a family of antioxidative compounds. The first step of pyranonigrins biosynthesis is performed by the hybrid PKS-NRPS synthetase that condenses 6 malonyl-CoA units to an acetyl starter unit, to form a 1,3,5-trioxotetradecane-6,8-dienyl-ACP. The enoyl reductase (ER) domain of pynA is likely to be functional during the first two rounds of polyketide chain extension, to generate the saturated C-C bonds of the alkyl side chain. PynA subsequently forms the amide bond between the acyl chain and L-serine. Although pynA has a terminal reductase domain, it appears to require the thioesterase pynI for the release of the straight-chain intermediate from pynA via the formation of a tetramic acid pyranonigrin J. The methyltransferase pynC then coverts pyranonigrin J to pyranonigrin I via N-methylation. The FAD-dependent monooxygenase pynG catalyzes an epoxidation-mediated cyclization to form the dihydro-gamma-pyrone moiety, followed by pynD-catalyzed oxidation of the alcohol to the ketone and enolization to yield the characteristic tetramic acid-fused gamma-pyrone core of pyranonigrin H. Pyranonigrin H is substrate of pynH for dehydration-mediated exo-methylene formation from the serine side chain to produce pyranonigrin E, before the oxidase pynE reduces the exo-methylene of pyranonigrin E into a pendant methyl to form pyranonigrin G. The FAD-linked oxidoreductase pynB performs the reverse reaction and converts pyranonigrin G back to pyranonigrin E. The chain is Cytochrome P450 monooxygenase pynD from Aspergillus niger (strain ATCC MYA-4892 / CBS 513.88 / FGSC A1513).